A 133-amino-acid polypeptide reads, in one-letter code: Antifungal protein ginkbilobin-like protein 2 (133 aa).

An N-terminal signal peptide occupies residues 1–24 (MSMGSFGFALAVMVLAVLVASAAG). Positions 28-133 (TNLVSSACNG…CFIRYEQYSI (106 aa)) constitute a Gnk2-homologous domain. Asn-36 is an alpha-D-mannopyranose binding site. 2 cysteine pairs are disulfide-bonded: Cys-87–Cys-96 and Cys-99–Cys-124. Alpha-D-mannopyranose is bound by residues Arg-118 and Glu-129.

Exerts antifungal activity through its carbohydrate-binding specificity. This is Antifungal protein ginkbilobin-like protein 2 from Picea glauca (White spruce).